The chain runs to 243 residues: MSDNEKETQVAEETQNTQATAESSNNDERRGRRNNRGGEGRRGDRRGRREDNHENEMLDRVVTINRVSKTHKGGRTFSFAALVVVGDGNGTVGVGYGKSREVPAAIAKGQLDAKKHLFNVPRIRGTVTHPVTGHDHAGTVMLRPAAPGTGVIAGSAVRAVMECAGITDILTKSMGSATAVNVVRATVDALKQLEEPEEIAARRGLSVQEVAPDQLLRERAAGIAEARKAREEAKAEAAAKDGE.

The interval 1–54 (MSDNEKETQVAEETQNTQATAESSNNDERRGRRNNRGGEGRRGDRRGRREDNHE) is disordered. Over residues 11-24 (AEETQNTQATAESS) the composition is skewed to polar residues. The span at 26-54 (NDERRGRRNNRGGEGRRGDRRGRREDNHE) shows a compositional bias: basic and acidic residues. Residues 57–120 (MLDRVVTINR…LDAKKHLFNV (64 aa)) enclose the S5 DRBM domain.

This sequence belongs to the universal ribosomal protein uS5 family. In terms of assembly, part of the 30S ribosomal subunit. Contacts proteins S4 and S8.

In terms of biological role, with S4 and S12 plays an important role in translational accuracy. Located at the back of the 30S subunit body where it stabilizes the conformation of the head with respect to the body. This is Small ribosomal subunit protein uS5 from Bifidobacterium animalis subsp. lactis (strain AD011).